Here is a 393-residue protein sequence, read N- to C-terminus: Bifunctional enzyme IspD/IspF (393 aa).

The interval 1–234 (MTISQRTAAI…ARLAAQLGDI (234 aa)) is 2-C-methyl-D-erythritol 4-phosphate cytidylyltransferase. Residues 235–393 (RTGTGYDVHA…SATIRLPWSA (159 aa)) are 2-C-methyl-D-erythritol 2,4-cyclodiphosphate synthase. A divalent metal cation-binding residues include Asp-241 and His-243. Residues 241–243 (DVH) and 267–268 (HS) contribute to the 4-CDP-2-C-methyl-D-erythritol 2-phosphate site. Residue His-275 coordinates a divalent metal cation. Residues 289-291 (DIG), 365-368 (TTSE), Phe-372, and Arg-375 each bind 4-CDP-2-C-methyl-D-erythritol 2-phosphate.

It in the N-terminal section; belongs to the IspD/TarI cytidylyltransferase family. IspD subfamily. The protein in the C-terminal section; belongs to the IspF family. Requires a divalent metal cation as cofactor.

It catalyses the reaction 2-C-methyl-D-erythritol 4-phosphate + CTP + H(+) = 4-CDP-2-C-methyl-D-erythritol + diphosphate. It carries out the reaction 4-CDP-2-C-methyl-D-erythritol 2-phosphate = 2-C-methyl-D-erythritol 2,4-cyclic diphosphate + CMP. The protein operates within isoprenoid biosynthesis; isopentenyl diphosphate biosynthesis via DXP pathway; isopentenyl diphosphate from 1-deoxy-D-xylulose 5-phosphate: step 2/6. It participates in isoprenoid biosynthesis; isopentenyl diphosphate biosynthesis via DXP pathway; isopentenyl diphosphate from 1-deoxy-D-xylulose 5-phosphate: step 4/6. In terms of biological role, bifunctional enzyme that catalyzes the formation of 4-diphosphocytidyl-2-C-methyl-D-erythritol from CTP and 2-C-methyl-D-erythritol 4-phosphate (MEP) (IspD), and catalyzes the conversion of 4-diphosphocytidyl-2-C-methyl-D-erythritol 2-phosphate (CDP-ME2P) to 2-C-methyl-D-erythritol 2,4-cyclodiphosphate (ME-CPP) with a corresponding release of cytidine 5-monophosphate (CMP) (IspF). The sequence is that of Bifunctional enzyme IspD/IspF from Bradyrhizobium sp. (strain BTAi1 / ATCC BAA-1182).